Consider the following 193-residue polypeptide: Rho-related protein racF1 (193 aa).

10-17 (GDGAVGKT) contributes to the GTP binding site. The Effector region motif lies at 32 to 40 (YIPTVFDNY). Residues 57–61 (DTAGQ) and 115–118 (TKQD) contribute to the GTP site. Cysteine methyl ester is present on Cys190. Cys190 carries the S-geranylgeranyl cysteine lipid modification. A propeptide spans 191–193 (TIM) (removed in mature form).

The protein belongs to the small GTPase superfamily. Rho family. As to quaternary structure, interacts with pakB.

Its subcellular location is the membrane. Its function is as follows. Might act in concert and/or share functions with other members of the RHO family in the regulation of a subset of cytoskeletal rearrangements that are required for these processes. This Dictyostelium discoideum (Social amoeba) protein is Rho-related protein racF1 (racF1).